The chain runs to 158 residues: Putative 4-hydroxy-4-methyl-2-oxoglutarate aldolase (158 aa).

Residues glycine 75–isoleucine 78 and arginine 97 contribute to the substrate site. Residue aspartate 98 coordinates a divalent metal cation.

It belongs to the class II aldolase/RraA-like family. Homotrimer. The cofactor is a divalent metal cation.

It catalyses the reaction 4-hydroxy-4-methyl-2-oxoglutarate = 2 pyruvate. The enzyme catalyses oxaloacetate + H(+) = pyruvate + CO2. Its function is as follows. Catalyzes the aldol cleavage of 4-hydroxy-4-methyl-2-oxoglutarate (HMG) into 2 molecules of pyruvate. Also contains a secondary oxaloacetate (OAA) decarboxylase activity due to the common pyruvate enolate transition state formed following C-C bond cleavage in the retro-aldol and decarboxylation reactions. This chain is Putative 4-hydroxy-4-methyl-2-oxoglutarate aldolase, found in Saccharopolyspora erythraea (strain ATCC 11635 / DSM 40517 / JCM 4748 / NBRC 13426 / NCIMB 8594 / NRRL 2338).